Reading from the N-terminus, the 363-residue chain is uncharacterized protein (363 aa).

Residues 35–262 (TVPGPPGAES…GLSPCCGDGG (228 aa)) are disordered. The segment covering 56 to 75 (AVSSSRNPNSAGRTPNSYLT) has biased composition (polar residues). The segment covering 100–116 (GADPALGSLPAAGLSGL) has biased composition (low complexity).

This is an uncharacterized protein from Homo sapiens (Human).